Reading from the N-terminus, the 572-residue chain is DnaJ protein ERDJ3A (572 aa).

The first 23 residues, 1–23 (MVRTRLAISVVLVSTLLLLNVKA), serve as a signal peptide directing secretion. The J domain occupies 27-91 (DPYKVLGVSK…EKRKNYDLYG (65 aa)). The stretch at 394–423 (ITVKNLKSAVQELGKLLEGLEKKNKKVSSK) forms a coiled coil. The tract at residues 419-439 (KVSSKSQAGQAPNESSEKIPL) is disordered. Positions 422-432 (SKSQAGQAPNE) are enriched in polar residues. An N-linked (GlcNAc...) asparagine glycan is attached at Asn431.

Interacts with BIP1 and BIP3. The interaction with BIP1 and BIP3 activates the ATPase enzyme activities of BIP1 and BIP3. In terms of processing, not N-glycosylated. As to expression, expressed in roots, leaves, stems, flowers, mature pollen grains and growing pollen tubes.

It is found in the endoplasmic reticulum lumen. Functionally, regulates protein folding in the endoplasmic reticulum (ER) lumen. Functions probably as a co-molecular chaperone that is required for normal growth of pollen tubes under high-temperature stress. The protein is DnaJ protein ERDJ3A (ERDJ3A) of Arabidopsis thaliana (Mouse-ear cress).